We begin with the raw amino-acid sequence, 842 residues long: Glucans biosynthesis glucosyltransferase H (842 aa).

6 helical membrane-spanning segments follow: residues Leu-141–Pro-161, Ile-194–Met-214, Val-513–Leu-533, Leu-570–Trp-590, Val-615–Gly-635, and Phe-680–Ile-700.

Belongs to the glycosyltransferase 2 family. OpgH subfamily.

Its subcellular location is the cell inner membrane. It functions in the pathway glycan metabolism; osmoregulated periplasmic glucan (OPG) biosynthesis. In terms of biological role, involved in the biosynthesis of osmoregulated periplasmic glucans (OPGs). This Enterobacter sp. (strain 638) protein is Glucans biosynthesis glucosyltransferase H.